The following is a 196-amino-acid chain: Chaperone protein TorD (196 aa).

The protein belongs to the TorD/DmsD family. TorD subfamily.

The protein localises to the cytoplasm. In terms of biological role, involved in the biogenesis of TorA. Acts on TorA before the insertion of the molybdenum cofactor and, as a result, probably favors a conformation of the apoenzyme that is competent for acquiring the cofactor. The polypeptide is Chaperone protein TorD (Pasteurella multocida (strain Pm70)).